The following is a 64-amino-acid chain: Large ribosomal subunit protein uL29 (64 aa).

This sequence belongs to the universal ribosomal protein uL29 family.

In Legionella pneumophila (strain Lens), this protein is Large ribosomal subunit protein uL29.